The following is a 545-amino-acid chain: Chaperonin GroEL 2 (545 aa).

ATP is bound by residues 29 to 32 (TLGP), 86 to 90 (DGTTT), Gly413, 479 to 481 (NAA), and Asp495.

It belongs to the chaperonin (HSP60) family. As to quaternary structure, forms a cylinder of 14 subunits composed of two heptameric rings stacked back-to-back. Interacts with the co-chaperonin GroES.

It is found in the cytoplasm. It catalyses the reaction ATP + H2O + a folded polypeptide = ADP + phosphate + an unfolded polypeptide.. Functionally, together with its co-chaperonin GroES, plays an essential role in assisting protein folding. The GroEL-GroES system forms a nano-cage that allows encapsulation of the non-native substrate proteins and provides a physical environment optimized to promote and accelerate protein folding. This Prochlorococcus marinus (strain AS9601) protein is Chaperonin GroEL 2.